Here is a 95-residue protein sequence, read N- to C-terminus: Nickel and cobalt resistance protein CnrY (95 aa).

The Cytoplasmic portion of the chain corresponds to 1-45; sequence MADVEEWLTHARKVTQEASIGVDVTSIQECISAEPAQRVLVARRD. Residues 46-68 form a helical membrane-spanning segment; the sequence is AWRAICCAAFAALVAFAAINRVA. Topologically, residues 69-95 are periplasmic; it reads TIMLEKPAPTWVATPSAASPFGLLIGK.

It to A.xylosoxydans NccY.

The protein localises to the cell inner membrane. In terms of biological role, nickel and cobalt resistance proteins CnrA, CnrB, CnrC CnrH and CnrR may be involved in the regulation of CNR. CnrH alone is able to activate cnr expression, and both CnrY and CrnX are needed for nickel induction of CnrH. In the absence of wild-type CnrY (due either to a frameshift, PubMed:10671463 or absence of the transcript, PubMed:10671464), nickel and cobalt resistance is constitutive, indicating that CrnY may act as a repressor or an anti-sigma factor. In Cupriavidus metallidurans (strain ATCC 43123 / DSM 2839 / NBRC 102507 / CH34) (Ralstonia metallidurans), this protein is Nickel and cobalt resistance protein CnrY (cnrY).